Reading from the N-terminus, the 99-residue chain is Putative pterin-4-alpha-carbinolamine dehydratase (99 aa).

It belongs to the pterin-4-alpha-carbinolamine dehydratase family.

The enzyme catalyses (4aS,6R)-4a-hydroxy-L-erythro-5,6,7,8-tetrahydrobiopterin = (6R)-L-erythro-6,7-dihydrobiopterin + H2O. This Aquifex aeolicus (strain VF5) protein is Putative pterin-4-alpha-carbinolamine dehydratase.